Reading from the N-terminus, the 249-residue chain is 3-deoxy-manno-octulosonate cytidylyltransferase (249 aa).

The protein belongs to the KdsB family.

The protein localises to the cytoplasm. It carries out the reaction 3-deoxy-alpha-D-manno-oct-2-ulosonate + CTP = CMP-3-deoxy-beta-D-manno-octulosonate + diphosphate. Its pathway is nucleotide-sugar biosynthesis; CMP-3-deoxy-D-manno-octulosonate biosynthesis; CMP-3-deoxy-D-manno-octulosonate from 3-deoxy-D-manno-octulosonate and CTP: step 1/1. It participates in bacterial outer membrane biogenesis; lipopolysaccharide biosynthesis. Functionally, activates KDO (a required 8-carbon sugar) for incorporation into bacterial lipopolysaccharide in Gram-negative bacteria. This chain is 3-deoxy-manno-octulosonate cytidylyltransferase, found in Coxiella burnetii (strain CbuG_Q212) (Coxiella burnetii (strain Q212)).